Here is an 86-residue protein sequence, read N- to C-terminus: Toxin CngtIV (86 aa).

A signal peptide spans 1-19; it reads MNSLLIITACLVLIGTVWA. In terms of domain architecture, LCN-type CS-alpha/beta spans 20–84; it reads KDGYLVDVKG…TWPLPNKRCG (65 aa). 4 cysteine pairs are disulfide-bonded: Cys-30-Cys-83, Cys-34-Cys-59, Cys-43-Cys-64, and Cys-47-Cys-66.

It belongs to the long (4 C-C) scorpion toxin superfamily. Sodium channel inhibitor family. Beta subfamily. In terms of tissue distribution, expressed by the venom gland.

Its subcellular location is the secreted. In terms of biological role, beta toxins bind voltage-independently at site-4 of sodium channels (Nav) and shift the voltage of activation toward more negative potentials thereby affecting sodium channel activation and promoting spontaneous and repetitive firing. This chain is Toxin CngtIV, found in Centruroides noxius (Mexican scorpion).